Here is a 295-residue protein sequence, read N- to C-terminus: MKTFLVFALLAVVATSTIAQMETSCIPGLERPWQEQPLPPQHTLFPQQQPFPQQQQPPFSQQQPSFLQQQPILPQLPFSQQQQPVLPQQSPFSQQQLVLPPQQQYQQVLQQQIPIVQPSVLQQLNPCKVFLQQQCNPVAMPQRLARSQMLQQSSCHVMQQQCCQQLPQIPEQSRYDVIRAITYSIILQEQQQGFVQAQQQQPQQLGQGVSQSQQQSQQQLGQCSFQQPQQQLGQQPQQQQVLQGTFLQPHQIAHLEVMTSIALRTLPTMCSVNVPLYSSTTSVPFSVGTGVGAYL.

Positions 1–20 (MKTFLVFALLAVVATSTIAQ) are cleaved as a signal peptide. The segment at 30-61 (ERPWQEQPLPPQHTLFPQQQPFPQQQQPPFSQ) is disordered. Low complexity predominate over residues 41–61 (QHTLFPQQQPFPQQQQPPFSQ).

This sequence belongs to the gliadin/glutenin family. As to quaternary structure, disulfide-bridge linked aggregates.

Glutenins are high-molecular weight seed storage proteins of wheat endosperm. Thought to be responsible for the visco-elastic property of wheat dough. The polypeptide is Glutenin, low molecular weight subunit PTDUCD1 (Triticum aestivum (Wheat)).